Here is a 312-residue protein sequence, read N- to C-terminus: Protoheme IX farnesyltransferase (312 aa).

Transmembrane regions (helical) follow at residues Val31 to His51, Pro52 to Leu72, Ile119 to Ile139, Ile152 to Gly172, Ile179 to Phe199, Ile225 to Phe245, Val247 to Val267, and Ile288 to Leu308.

The protein belongs to the UbiA prenyltransferase family. Protoheme IX farnesyltransferase subfamily.

Its subcellular location is the cell inner membrane. The enzyme catalyses heme b + (2E,6E)-farnesyl diphosphate + H2O = Fe(II)-heme o + diphosphate. It participates in porphyrin-containing compound metabolism; heme O biosynthesis; heme O from protoheme: step 1/1. In terms of biological role, converts heme B (protoheme IX) to heme O by substitution of the vinyl group on carbon 2 of heme B porphyrin ring with a hydroxyethyl farnesyl side group. This Rhodopseudomonas palustris (strain ATCC BAA-98 / CGA009) protein is Protoheme IX farnesyltransferase.